A 371-amino-acid chain; its full sequence is Macronuclear solute carrier homolog CR-MSC (371 aa).

Solcar repeat units follow at residues 16–111, 120–208, and 215–304; these read RMNY…FYDK, ARPD…CKEN, and PHWI…LSQF. Transmembrane regions (helical) follow at residues 22-42, 89-109, 126-146, 184-204, 221-241, and 281-301; these read FAAA…LDMV, TFFF…GYFY, VAAG…IDIV, AGAN…IYDW, LWGT…FDMI, and FGSF…ICYL.

This sequence belongs to the mitochondrial carrier (TC 2.A.29) family.

It is found in the membrane. The sequence is that of Macronuclear solute carrier homolog CR-MSC from Oxytricha trifallax (Sterkiella histriomuscorum).